A 744-amino-acid chain; its full sequence is ATP-dependent zinc metalloprotease FtsH (744 aa).

At 1 to 16 (MQDQNNSNTPKKKKLS) the chain is on the cytoplasmic side. The helical transmembrane segment at 17–37 (FWGIIGIVASILVLLVIAYII) threads the bilayer. Topologically, residues 38-177 (YYYVSQTTVL…ESIWSTVLRY (140 aa)) are extracellular. A helical transmembrane segment spans residues 178 to 198 (GTNIIFLLLFAASFIFMFMSF). The Cytoplasmic segment spans residues 199–744 (RSQRGTGGLL…EEKSKDEKNN (546 aa)). 264–271 (GPPGTGKT) contributes to the ATP binding site. Position 486 (histidine 486) interacts with Zn(2+). Glutamate 487 is a catalytic residue. Zn(2+)-binding residues include histidine 490 and aspartate 564. The disordered stretch occupies residues 722-744 (IEANKSSSKSTVNEEKSKDEKNN). A compositionally biased stretch (basic and acidic residues) spans 733-744 (VNEEKSKDEKNN).

It in the central section; belongs to the AAA ATPase family. In the C-terminal section; belongs to the peptidase M41 family. In terms of assembly, homohexamer. Zn(2+) is required as a cofactor.

Its subcellular location is the cell membrane. In terms of biological role, acts as a processive, ATP-dependent zinc metallopeptidase for both cytoplasmic and membrane proteins. Plays a role in the quality control of integral membrane proteins. The chain is ATP-dependent zinc metalloprotease FtsH from Metamycoplasma arthritidis (strain 158L3-1) (Mycoplasma arthritidis).